Consider the following 679-residue polypeptide: Protein hook (679 aa).

The region spanning 6-123 (NEMYYSLLEW…RLLQLVLGCA (118 aa)) is the Calponin-homology (CH) domain. Coiled coils occupy residues 135–437 (EIMC…LKCG) and 480–574 (QTAL…QEIL).

This sequence belongs to the hook family. Homodimer. Interacts with microtubules via its N-terminus.

The protein localises to the cytoplasm. Its subcellular location is the cytoskeleton. It localises to the endosome. It is found in the synapse. In terms of biological role, involved in endocytic trafficking by stabilizing organelles of the endocytic pathway. Probably acts as a cytoskeletal linker protein required to tether endosome vesicles to the cytoskeleton. Involved in modulation of endocytosis at stages required for down-regulation of membrane proteins that control synapse size. Not involved in synaptic vesicle recycling. Required in R7 cells for boss endocytosis into multivesicular bodies (MVBs). Has a role in regulating adult longevity. This Drosophila erecta (Fruit fly) protein is Protein hook.